A 475-amino-acid chain; its full sequence is MAASALRGLPVAGGGESSESEDDGWEIGYLDRTSQKLKRLLPIEEKKEKFKKAMTIGDVSLVQELLDSGISVDSNFQYGWTPLMYAASVANAELVRVLLDRGANASFEKDKQSILITACSAHGSEEQILKCVELLLSRNADPNVACRRLMTPIMYAARDGHTQVVALLVAHGAEVNTQDENGYTALTWAARQGHKNIVLKLLELGANKMLQTKDGKMPSEIAKRNKHHEIFNLLSFTLNPLEGKLQQLTKEDTICKILTTDSDREKDHIFSSYTAFGDLEVFLHGLGLEHMTDLLKERDITLRHLLTMREDEFTKNGITSKDQQKILAALKELQVEEIQFGELSEETKLEISGDEFLNFLLKLNKQCGHLITAVQNVITELPVNSQKITLEWASPQNFTSVCEELVNNVEDLSEKVCKLKDLIQKLQNERENDPTHIQLREEVSTWNSRILKRTAITICGFGFLLFICKLTFQRK.

The segment at 1 to 25 is disordered; that stretch reads MAASALRGLPVAGGGESSESEDDGW. Residues serine 17, serine 18, and serine 20 each carry the phosphoserine modification. 6 ANK repeats span residues 45 to 74, 78 to 107, 110 to 144, 148 to 177, 181 to 210, and 214 to 243; these read EKKE…SVDS, YGWT…NASF, DKQS…DPNV, RLMT…EVNT, NGYT…NKML, and DGKM…PLEG. The SAM domain occupies 272–334; sequence SYTAFGDLEV…KILAALKELQ (63 aa).

Interacts with DDX4, PIWIL1, RANBP9 and TDRD1. In terms of tissue distribution, expressed exclusively in the testis and ovary and at higher levels in the adult testis compared with the adult ovary.

It localises to the cytoplasm. In terms of biological role, plays a central role during spermatogenesis by repressing transposable elements and preventing their mobilization, which is essential for the germline integrity. Acts via the piRNA metabolic process, which mediates the repression of transposable elements during meiosis by forming complexes composed of piRNAs and Piwi proteins and governs the methylation and subsequent repression of transposons. Its association with pi-bodies suggests a participation in the primary piRNAs metabolic process. Required prior to the pachytene stage to facilitate the production of multiple types of piRNAs, including those associated with repeats involved in the regulation of retrotransposons. May act by mediating protein-protein interactions during germ cell maturation. The chain is Ankyrin repeat, SAM and basic leucine zipper domain-containing protein 1 from Homo sapiens (Human).